A 763-amino-acid chain; its full sequence is Dual specificity tyrosine-phosphorylation-regulated kinase 1A (763 aa).

S14 carries the phosphoserine modification. The segment at 32-57 (GQMPHSHQYSDRRQPNISDQQVSALS) is disordered. Over residues 46–57 (PNISDQQVSALS) the composition is skewed to polar residues. Y111 carries the phosphotyrosine; by autocatalysis modification. Positions 115–136 (KKRRHQQGQGDDSSHKKERKVY) are disordered. A Bipartite nuclear localization signal motif is present at residues 117–134 (RRHQQGQGDDSSHKKERK). Y140 carries the phosphotyrosine; by autocatalysis modification. At Y145 the chain carries Phosphotyrosine. Y159 carries the phosphotyrosine; by autocatalysis modification. Residues 159–479 (YEIDSLIGKG…PYYALQHSFF (321 aa)) form the Protein kinase domain. ATP is bound at residue 165 to 173 (IGKGSFGQV). Y177 bears the Phosphotyrosine; by autocatalysis mark. K188 contributes to the ATP binding site. Y219 carries the post-translational modification Phosphotyrosine; by autocatalysis. Position 238 to 241 (238 to 241 (FEML)) interacts with ATP. The active-site Proton acceptor is D287. S310 carries the phosphoserine; by autocatalysis modification. Phosphotyrosine; by autocatalysis is present on residues Y319 and Y321. Position 402 is a phosphothreonine; by autocatalysis (T402). A disordered region spans residues 408–442 (TKDGKREYKPPGTRKLHNILGVETGGPGGRRAGES). Y449 is subject to Phosphotyrosine; by autocatalysis. Positions 485-501 (EGTNTSNSVSTSPAMEQ) are enriched in polar residues. Disordered regions lie at residues 485 to 540 (EGTN…HSGG), 596 to 679 (NALH…GNQA), and 744 to 763 (DREESPMTGVCVQQSPVASS). The span at 502-525 (SQSSGTTSSTSSSSGGSSGTSNSG) shows a compositional bias: low complexity. A phosphoserine mark is found at S529 and S538. Residues 595-625 (QNALHHHHGNSSHHHHHHHHHHHHHGQQALG) form a histidine-rich domain (HRD) region. Residues 598 to 620 (LHHHHGNSSHHHHHHHHHHHHHG) are compositionally biased toward basic residues. Over residues 634–645 (NSPTNSSSTQDS) the composition is skewed to polar residues. Residues 654–672 (SMTSLSSSTTSSSTSSSST) show a composition bias toward low complexity. 2 positions are modified to phosphoserine: S748 and S758. The segment covering 754-763 (CVQQSPVASS) has biased composition (polar residues).

The protein belongs to the protein kinase superfamily. CMGC Ser/Thr protein kinase family. MNB/DYRK subfamily. In terms of assembly, interacts with RAD54L2/ARIP4. Interacts with CRY2. Interacts with RANBP9. Interacts with WDR68. Interacts with SIRT1. As to quaternary structure, (Microbial infection) Interacts with human adenovirus 5 E1A protein. Autophosphorylated on numerous tyrosine residues. Can also autophosphorylate on serine and threonine residues (in vitro). In terms of tissue distribution, ubiquitous. Highest levels in skeletal muscle, testis, fetal lung and fetal kidney.

It localises to the nucleus. Its subcellular location is the nucleus speckle. It carries out the reaction L-seryl-[protein] + ATP = O-phospho-L-seryl-[protein] + ADP + H(+). The catalysed reaction is L-threonyl-[protein] + ATP = O-phospho-L-threonyl-[protein] + ADP + H(+). It catalyses the reaction L-tyrosyl-[protein] + ATP = O-phospho-L-tyrosyl-[protein] + ADP + H(+). The enzyme catalyses [DNA-directed RNA polymerase] + ATP = phospho-[DNA-directed RNA polymerase] + ADP + H(+). Its activity is regulated as follows. Inhibited by RANBP9. Inhibited by harmine, leucettamine B and leucettine L41. Functionally, dual-specificity kinase which possesses both serine/threonine and tyrosine kinase activities. Exhibits a substrate preference for proline at position P+1 and arginine at position P-3. Plays an important role in double-strand breaks (DSBs) repair following DNA damage. Mechanistically, phosphorylates RNF169 and increases its ability to block accumulation of TP53BP1 at the DSB sites thereby promoting homologous recombination repair (HRR). Also acts as a positive regulator of transcription by acting as a CTD kinase that mediates phosphorylation of the CTD (C-terminal domain) of the large subunit of RNA polymerase II (RNAP II) POLR2A. May play a role in a signaling pathway regulating nuclear functions of cell proliferation. Modulates alternative splicing by phosphorylating the splice factor SRSF6. Has pro-survival function and negatively regulates the apoptotic process. Promotes cell survival upon genotoxic stress through phosphorylation of SIRT1. This in turn inhibits p53/TP53 activity and apoptosis. Phosphorylates SEPTIN4, SEPTIN5 and SF3B1 at 'Thr-434'. This Homo sapiens (Human) protein is Dual specificity tyrosine-phosphorylation-regulated kinase 1A.